An 806-amino-acid chain; its full sequence is Ribonucleoside-diphosphate reductase large subunit-like protein (806 aa).

It belongs to the ribonucleoside diphosphate reductase large chain family.

It is found in the virion. Its subcellular location is the host cytoplasm. In terms of biological role, does not possess a ribonucleotide reductase activity. Betaherpesviruses probably use another strategy to expand the dNTP pool in a quiescent host cell. The sequence is that of Ribonucleoside-diphosphate reductase large subunit-like protein from Human herpesvirus 7 (strain JI) (HHV-7).